The following is a 246-amino-acid chain: Homeobox protein SIX6 (246 aa).

The homeobox DNA-binding region spans glycine 128–alanine 187. The interval asparagine 190–isoleucine 246 is disordered. Over residues arginine 191–serine 201 the composition is skewed to polar residues. The residue at position 212 (threonine 212) is a Phosphothreonine. Positions alanine 219–isoleucine 246 are enriched in low complexity. Residues serine 221, serine 225, serine 227, and serine 228 each carry the phosphoserine modification.

The protein belongs to the SIX/Sine oculis homeobox family. Interacts with TLE4 and TLE5. Expressed in the developing and adult retina. Also expressed in the hypothalamic and the pituitary regions.

The protein localises to the nucleus. Its function is as follows. May be involved in eye development. This chain is Homeobox protein SIX6 (SIX6), found in Homo sapiens (Human).